The following is a 583-amino-acid chain: NEDD4-binding protein 2-like 2 (583 aa).

Positions 162–197 form a coiled coil; the sequence is NSEKSEIDNELFQFYKEIEELEKEKDGFENSCKESE. Residues 549–575 form a disordered region; the sequence is EPSHKSTQRPPPPQGRQRWGGSLGSHN.

This chain is NEDD4-binding protein 2-like 2 (N4BP2L2), found in Homo sapiens (Human).